A 266-amino-acid polypeptide reads, in one-letter code: Probable catechol O-methyltransferase 1 (266 aa).

S-adenosyl-L-methionine-binding residues include isoleucine 56, glutamate 78, serine 86, glutamate 106, valine 107, alanine 135, and aspartate 162. Position 162 (aspartate 162) interacts with Mg(2+). Lysine 165 contacts substrate. Mg(2+) contacts are provided by aspartate 190 and asparagine 191. Asparagine 191 contacts substrate.

It belongs to the class I-like SAM-binding methyltransferase superfamily. Cation-dependent O-methyltransferase family. The cofactor is Mg(2+).

It localises to the cytoplasm. It is found in the nucleus. The enzyme catalyses a catechol + S-adenosyl-L-methionine = a guaiacol + S-adenosyl-L-homocysteine + H(+). This chain is Probable catechol O-methyltransferase 1, found in Schizosaccharomyces pombe (strain 972 / ATCC 24843) (Fission yeast).